The chain runs to 899 residues: MLKAVLETTIGSKSKRDLKDYLPTLRNINKLERWALLLADEDFSKETEKLKDELKSGNSLENILERAFTLSREAARRRLKERPYDVQIIAGLALHKGKIIEMKTGEGKTLSSVQAAYLNSLTGDGVIIVTVNDYLAERDSNWMKPVFDLLGVSVGVVLSNMDYELRKAQYAKDITYVTNNELGFDYLRDNMRYDLNEKSLRKFNYCIIDEIDSILIDEARTPLIISGPTEGNTNAYLEVNSLVSFLKECSKDPKTGDYPLEIDDLDGDYTVDEKAKRISFTAKGLNNLEQLLVSKGIISGSMYTDSNFNYVHYMTQALKAHLLFLKNREYIVGDSGVEIVDEFTGRVLTGRRYSDGLHQAIEAKEGVRVANENKTMATITFQNLFRMFDKISGMTGTADTEAKEFHKIYNLDVVVVPTNRLLARIDEDDTIYYTEEFKFNAITDEVYKTYKKGQPVLVGTVSIEKSEILSAMFKSRGIKHEVLNAKNHSREAFIIAEAGAKHAVTIATNMAGRGTDIKLGGNIEHRVRKKIGTNVSLEEFQEAVKNERENYLKDYNEVKSLGGLYVIGSERHESRRIDNQLRGRSGRQGDPGRSRFYVSLEDDLMRLFAGDNLRSLMGKLGMATGEPITHSLLTKSLINAQKRVEDRNFEIRKHLLEYDDVITKQRDFIYAQRNSILKDTAIKDRILVALEEYLSFLLEGTKSSTVSNVFLNEVNSIFAYMLESLGSIENISYLDLKAKLMQIAKANLDEKENLIGRDLFNGFLRYEYLKNIDFKFQEHLANLDSLREAVYLRSYANKNPITEYKEEGFSIFSELIKDIKVSTIRRVLQLKLDSNSSDFKSTKKSRNVKPIHKELSGIVINENKSASNVQVVRSSPKIGRNEPCYCGSGKKYKNCHGKS.

Residues glutamine 87, 105-109, and aspartate 516 contribute to the ATP site; that span reads GEGKT. Residues cysteine 884, cysteine 886, cysteine 895, and histidine 896 each coordinate Zn(2+).

It belongs to the SecA family. Monomer and homodimer. Part of the essential Sec protein translocation apparatus which comprises SecA, SecYEG and auxiliary proteins SecDF. Other proteins may also be involved. The cofactor is Zn(2+).

It localises to the cell inner membrane. The protein localises to the cytoplasm. It catalyses the reaction ATP + H2O + cellular proteinSide 1 = ADP + phosphate + cellular proteinSide 2.. Part of the Sec protein translocase complex. Interacts with the SecYEG preprotein conducting channel. Has a central role in coupling the hydrolysis of ATP to the transfer of proteins into and across the cell membrane, serving as an ATP-driven molecular motor driving the stepwise translocation of polypeptide chains across the membrane. This Borreliella burgdorferi (strain ZS7) (Borrelia burgdorferi) protein is Protein translocase subunit SecA.